We begin with the raw amino-acid sequence, 1827 residues long: Microtubule-associated protein 2 (1827 aa).

A compositionally biased stretch (basic and acidic residues) spans 1-11 (MADERKDEAKA). 2 disordered regions span residues 1-88 (MADE…ETAE) and 109-221 (EQEK…EEKA). The span at 63-73 (SQGTYSNTKEN) shows a compositional bias: polar residues. A Phosphotyrosine modification is found at Tyr67. A compositionally biased stretch (basic and acidic residues) spans 109 to 119 (EQEKEAQHKDQ). Positions 120 to 133 (TAALPLAAEETANL) are enriched in low complexity. Ser136, Ser140, and Ser143 each carry phosphoserine. Basic and acidic residues-rich tracts occupy residues 175–194 (SDQK…DLKH) and 207–221 (YPDK…EEKA). Residues Ser285, Thr323, and Gln354 each carry the phosphoserine modification. Residues 340-497 (FAPAFLQPDD…EPTTDMLKQD (158 aa)) form a disordered region. Residues 364-380 (DSFKIEEPHEAKPDKMA) are compositionally biased toward basic and acidic residues. Glu386 carries the post-translational modification Phosphoserine. The span at 392–415 (KDAHIPVVEEHVMGKVLEEEKEAI) shows a compositional bias: basic and acidic residues. The segment covering 416 to 430 (NQETVQQRDTFTPSG) has biased composition (polar residues). Residues 435–467 (LTEKETELKLEEKTTISDKEAVPKESKPPKPAD) show a composition bias toward basic and acidic residues. A phosphoserine mark is found at Ser498, Ser601, Ser605, Ser610, Ser629, Ser725, and Ser729. The interval 579–660 (KEEATKSIEP…EPSSPQERMF (82 aa)) is disordered. The span at 596-606 (SDTRESVHESI) shows a compositional bias: basic and acidic residues. The interval 701 to 744 (SINLPMSCLDSIALGFNFGRGHDLSPLASDILTNTSGSMDEGDD) is interaction with KNDC1. Thr733 bears the Phosphothreonine mark. A phosphoserine mark is found at Ser736 and Ser738. A Phosphotyrosine modification is found at Tyr745. 4 positions are modified to phosphoserine: Ser821, Ser881, Ser890, and Ser936. Disordered regions lie at residues 931–988 (VDKE…DEIE), 1073–1160 (EATQ…ESSL), 1197–1216 (IQGP…TPSD), 1297–1378 (TTTD…ETTI), 1403–1460 (QLET…EVRR), 1471–1490 (AKKT…LKPA), and 1506–1638 (TTAA…AILV). Basic and acidic residues-rich tracts occupy residues 945–982 (GLSK…KTEE) and 1097–1155 (GHMK…KETS). Phosphoserine occurs at positions 1133, 1134, and 1139. At Thr1154 the chain carries Phosphothreonine. A phosphoserine mark is found at Ser1155 and Ser1159. The span at 1327 to 1337 (DEEEFEVEEAA) shows a compositional bias: acidic residues. Residues Ser1347 and Ser1353 each carry the phosphoserine modification. Basic and acidic residues-rich tracts occupy residues 1354 to 1376 (PERE…KDET) and 1407 to 1425 (IPKE…LEKH). Basic residues predominate over residues 1426–1435 (RKEKPFKTGR). A compositionally biased stretch (basic and acidic residues) spans 1440-1459 (TPERKVAKKEPSTVSRDEVR). A calmodulin-binding region spans residues 1447 to 1467 (KKEPSTVSRDEVRRKKAVYKK). Residues 1522 to 1539 (QAKDKVSDGVTKSPEKRS) show a composition bias toward basic and acidic residues. Ser1534 carries the post-translational modification Phosphoserine. Residues 1541–1552 (LPRPSSILPPRR) are compositionally biased toward low complexity. A Phosphoserine modification is found at Ser1555. 2 stretches are compositionally biased toward low complexity: residues 1562–1574 (SFSL…SSAR) and 1587–1603 (KSGT…AITP). A Phosphoserine modification is found at Ser1588. A phosphothreonine mark is found at Thr1602, Thr1605, Thr1616, Thr1619, and Thr1649. The span at 1609–1619 (YSSRTPGTPGT) shows a compositional bias: polar residues. Ser1653 is subject to Phosphoserine. Tau/MAP repeat units lie at residues 1661-1691 (RLIN…KGGQ), 1692-1722 (VQIV…GGGR), and 1723-1754 (VKIE…GGGN). At Ser1679 the chain carries Phosphoserine; by MARK1. The disordered stretch occupies residues 1779 to 1801 (ITQSPGRSSVASPRRLSNVSSSG). Residues Ser1782, Ser1787, Ser1790, Ser1795, and Ser1808 each carry the phosphoserine modification.

As to quaternary structure, interacts with KNDC1 (via KIND2); the interaction enhances MAP2 phosphorylation and localizes KNDC1 to dendrites. Interacts with DPYSL5. Phosphorylated at serine residues in K-X-G-S motifs by MAP/microtubule affinity-regulating kinase (MARK1 or MARK2), causing detachment from microtubules, and their disassembly. Isoform 2 is probably phosphorylated by PKA at Ser-323, Ser-354 and Ser-386 and by FYN at Tyr-67. The interaction with KNDC1 enhances MAP2 threonine phosphorylation.

The protein resides in the cytoplasm. Its subcellular location is the cytoskeleton. It localises to the cell projection. The protein localises to the dendrite. In terms of biological role, the exact function of MAP2 is unknown but MAPs may stabilize the microtubules against depolymerization. They also seem to have a stiffening effect on microtubules. This is Microtubule-associated protein 2 (MAP2) from Homo sapiens (Human).